Reading from the N-terminus, the 290-residue chain is Pantothenate synthetase (290 aa).

34 to 41 (MGNLHDGH) contacts ATP. His41 serves as the catalytic Proton donor. (R)-pantoate is bound at residue Gln65. Position 65 (Gln65) interacts with beta-alanine. 156-159 (GKKD) serves as a coordination point for ATP. Gln162 contacts (R)-pantoate. Residues Ala185 and 193–196 (LSSR) contribute to the ATP site.

This sequence belongs to the pantothenate synthetase family. As to quaternary structure, homodimer.

The protein localises to the cytoplasm. The enzyme catalyses (R)-pantoate + beta-alanine + ATP = (R)-pantothenate + AMP + diphosphate + H(+). Its pathway is cofactor biosynthesis; (R)-pantothenate biosynthesis; (R)-pantothenate from (R)-pantoate and beta-alanine: step 1/1. Functionally, catalyzes the condensation of pantoate with beta-alanine in an ATP-dependent reaction via a pantoyl-adenylate intermediate. The polypeptide is Pantothenate synthetase (Acidovorax ebreus (strain TPSY) (Diaphorobacter sp. (strain TPSY))).